The primary structure comprises 469 residues: ATP synthase subunit beta (469 aa).

156–163 contacts ATP; sequence GGAGVGKT.

It belongs to the ATPase alpha/beta chains family. As to quaternary structure, F-type ATPases have 2 components, CF(1) - the catalytic core - and CF(0) - the membrane proton channel. CF(1) has five subunits: alpha(3), beta(3), gamma(1), delta(1), epsilon(1). CF(0) has three main subunits: a(1), b(2) and c(9-12). The alpha and beta chains form an alternating ring which encloses part of the gamma chain. CF(1) is attached to CF(0) by a central stalk formed by the gamma and epsilon chains, while a peripheral stalk is formed by the delta and b chains.

The protein resides in the cell membrane. It carries out the reaction ATP + H2O + 4 H(+)(in) = ADP + phosphate + 5 H(+)(out). Its function is as follows. Produces ATP from ADP in the presence of a proton gradient across the membrane. The catalytic sites are hosted primarily by the beta subunits. The chain is ATP synthase subunit beta from Lactococcus lactis subsp. cremoris (strain MG1363).